The primary structure comprises 410 residues: Argininosuccinate synthase (410 aa).

ATP contacts are provided by residues 13-21 (AYSGGLDTS) and alanine 40. 2 residues coordinate L-citrulline: tyrosine 91 and serine 96. An ATP-binding site is contributed by glycine 121. L-aspartate-binding residues include threonine 123, asparagine 127, and aspartate 128. Residue asparagine 127 coordinates L-citrulline. Arginine 131, serine 182, serine 191, glutamate 267, and tyrosine 279 together coordinate L-citrulline.

Belongs to the argininosuccinate synthase family. Type 1 subfamily. Homotetramer.

Its subcellular location is the cytoplasm. It carries out the reaction L-citrulline + L-aspartate + ATP = 2-(N(omega)-L-arginino)succinate + AMP + diphosphate + H(+). The protein operates within amino-acid biosynthesis; L-arginine biosynthesis; L-arginine from L-ornithine and carbamoyl phosphate: step 2/3. This Maricaulis maris (strain MCS10) (Caulobacter maris) protein is Argininosuccinate synthase.